The following is a 247-amino-acid chain: MGHKVNPIGMRLQVNRTWDSRWYADTKDYGDLLLEDIKIRDYIKKGWWEHVAKRDKRPAGDAGISKIIIERPHKKCRVTIHSARPGVIIGKKGADIEGLRKKLAEITDSELHLNIVEIRKPELDARLVAESIAQQLERRVSFRRAMKRAVQNAMRMGSLGIRVNVAGRLGGAEIARTEWYREGRVPLHTLRADIDYAHAEAETAYGIIGIKTWIFKGEIMEHDPSAHDRRQQELQESGGASRPRRDR.

Positions 51–119 (VAKRDKRPAG…ELHLNIVEIR (69 aa)) constitute a KH type-2 domain. A compositionally biased stretch (basic and acidic residues) spans 224 to 233 (PSAHDRRQQE). The interval 224–247 (PSAHDRRQQELQESGGASRPRRDR) is disordered.

The protein belongs to the universal ribosomal protein uS3 family. As to quaternary structure, part of the 30S ribosomal subunit. Forms a tight complex with proteins S10 and S14.

Functionally, binds the lower part of the 30S subunit head. Binds mRNA in the 70S ribosome, positioning it for translation. This is Small ribosomal subunit protein uS3 from Jannaschia sp. (strain CCS1).